Here is a 163-residue protein sequence, read N- to C-terminus: Large ribosomal subunit protein mL59 (163 aa).

The segment at 33–53 (PAGADPETHKTPYQEESPNPF) is disordered.

Belongs to the mitochondrion-specific ribosomal protein mL59 family. As to quaternary structure, component of the mitochondrial large ribosomal subunit (mt-LSU). Mature N.crassa 74S mitochondrial ribosomes consist of a small (37S) and a large (54S) subunit. The 37S small subunit contains a 16S ribosomal RNA (16S mt-rRNA) and 32 different proteins. The 54S large subunit contains a 23S rRNA (23S mt-rRNA) and 42 different proteins.

It localises to the mitochondrion. Functionally, component of the mitochondrial ribosome (mitoribosome), a dedicated translation machinery responsible for the synthesis of mitochondrial genome-encoded proteins, including at least some of the essential transmembrane subunits of the mitochondrial respiratory chain. The mitoribosomes are attached to the mitochondrial inner membrane and translation products are cotranslationally integrated into the membrane. The chain is Large ribosomal subunit protein mL59 (mrpl25) from Neurospora crassa (strain ATCC 24698 / 74-OR23-1A / CBS 708.71 / DSM 1257 / FGSC 987).